We begin with the raw amino-acid sequence, 160 residues long: Heme transporter hrg-5 (160 aa).

A helical transmembrane segment spans residues 21–41 (IALTILDILIGFSNILSYAIQ). Asn44 is a glycosylation site (N-linked (GlcNAc...) asparagine). The next 3 helical transmembrane spans lie at 47–67 (ALTL…MFLA), 89–109 (ITLG…AGVT), and 123–142 (FTGL…ALLA). Asn144 is a glycosylation site (N-linked (GlcNAc...) asparagine).

The protein belongs to the HRG family.

Its subcellular location is the membrane. In terms of biological role, heme transporter. This chain is Heme transporter hrg-5 (hrg-5), found in Caenorhabditis elegans.